A 180-amino-acid polypeptide reads, in one-letter code: NAD(P)H-quinone oxidoreductase subunit I, chloroplastic (180 aa).

4Fe-4S ferredoxin-type domains are found at residues glycine 55 to arginine 84 and leucine 95 to glutamate 124. 8 residues coordinate [4Fe-4S] cluster: cysteine 64, cysteine 67, cysteine 70, cysteine 74, cysteine 104, cysteine 107, cysteine 110, and cysteine 114.

The protein belongs to the complex I 23 kDa subunit family. In terms of assembly, NDH is composed of at least 16 different subunits, 5 of which are encoded in the nucleus. [4Fe-4S] cluster is required as a cofactor.

It is found in the plastid. It localises to the chloroplast thylakoid membrane. The enzyme catalyses a plastoquinone + NADH + (n+1) H(+)(in) = a plastoquinol + NAD(+) + n H(+)(out). It catalyses the reaction a plastoquinone + NADPH + (n+1) H(+)(in) = a plastoquinol + NADP(+) + n H(+)(out). Functionally, NDH shuttles electrons from NAD(P)H:plastoquinone, via FMN and iron-sulfur (Fe-S) centers, to quinones in the photosynthetic chain and possibly in a chloroplast respiratory chain. The immediate electron acceptor for the enzyme in this species is believed to be plastoquinone. Couples the redox reaction to proton translocation, and thus conserves the redox energy in a proton gradient. The chain is NAD(P)H-quinone oxidoreductase subunit I, chloroplastic from Amborella trichopoda.